A 1582-amino-acid polypeptide reads, in one-letter code: MRGQAAAPGPIWILAPLLLLLLLLGRWARAASGADIGPGTEQCTTLVQGKFFGYFSAAAVFPANASRCSWTLRNPDPRRYTLYMKVAKAPAPCSGPGRVRTYQFDSFLESTRTYLGVESFDEVLRLCDSSAPLAFLQASKQFLQMQRQQPPQDGDLGPQGEFPSSSDDFSVEYLVVGNRNPSHAACQMLCRWLDACLAGSRSSHPCGIMQTPCACLGGDVGDPASSPLVPRGDVCLRDGVAGGPENCLTSLTQDRGGHGSAGGWKLWSLWGECTRDCGGGLQTRTRTCLPTLGVEGGGCEGVLEEGRLCNRKACGPTGRSSSRSQSLRSTDARRREEFGDELQQFGFPSPQTGDPAAEEWSPWSVCSSTCGEGWQTRTRFCVSSSYSTQCSGPLREQRLCNNSAVCPVHGAWDEWSPWSLCSSTCGRGFRDRTRTCRPPQFGGNPCEGPEKQTKFCNIALCPGRAVDGNWNEWSSWSTCSASCSQGRQQRTRECNGPSYGGAECQGHWVETRDCFLQQCPVDGKWQAWASWGSCSVTCGGGSQRRERVCSGPFFGGAACQGPQDEYRQCGAQRCPEPHEICDEDNFGAVVWKETPAGEVAAVRCPRNATGLILRRCELDEEGIAFWEPPTYIRCVSIDYRNIQMMTREHLAKAQRGLPGEGVSEVIQTLLEISQDGTSYSGDLLSTIDVLRNMTEIFRRAYYSPTPGDVQNFVQIISNLLAEENRDKWEEAQLMGPNAKELFRLVEDFVDVIGFRMKDLRDAYQVTDNLVLSIHKLPASGATDISFPMKGWRATGDWAKVPEDRVTVSKSVFSTGLAEADDSSVFVVGTVLYRNLGSFLALQRNTTVLNSKVISVTVKPPPRSLLTPLEIEFAHMYNGTTNQTCILWDETDGPSSSAPPQLGPWSWRGCRTVPLDALRTRCLCDRLSTFAILAQLSADATMDKVTVPSVTLIVGCGVSSLTLLMLVIIYVSVWRYIRSERSVILINFCLSIISSNALILIGQTQTRNKVVCTLVAAFLHFFFLSSFCWVLTEAWQSYMAVTGRLRSRLVRKRFLCLGWGLPALVVAISVGFTKAKGYSTMNYCWLSLEGGLLYAFVGPAAAVVLVNMVIGILVFNKLVSKDGITDKKLKERAGASLWSSCVVLPLLALTWMSAVLAVTDRRSALFQILFAVFDSLEGFVIVMVHCILRREVQDAVKCRVVDRQEEGNGDSGGSFQNGHAQLMTDFEKDVDLACRSVLNKDIAACRTATITGTFKRPSLPEEEKMKLAKGPPPTFNSLPANVSKLHLHGSPRYPGGPLPDFPNHSLTLKKDKAPKSSFIGDGDIFKKLDSELSRAQEKALDTSYVILPTATATLRPKPKEEPKYSINIDQMPQTRLIHLSMAPDASFPTRSPPAREPPGGAPPEVPPVQPPPPPPPPPPPPQQPIPPPPTLEPAPPSLGDTGEPAAHPGPSSGAGAKNENVATLSVSSLERRKSRYAELDFEKIMHTRKRHQDMFQDLNRKLQHAAEKEKEVPGADSKPEKQQTPNKRAWESLRKPHGTPAWVKKELEPLPPSPLELRSVEWEKAGATIPLVGQDIIDLQTEV.

The N-terminal stretch at 1-33 (MRGQAAAPGPIWILAPLLLLLLLLGRWARAASG) is a signal peptide. Over 34–948 (ADIGPGTEQC…ATMDKVTVPS (915 aa)) the chain is Extracellular. Asparagine 64 carries N-linked (GlcNAc...) asparagine glycosylation. Residues 261–315 (AGGWKLWSLWGECTRDCGGGLQTRTRTCLPTLGVEGGGCEGVLEEGRLCNRKACG) form the TSP type-1 1 domain. 3 disulfide bridges follow: cysteine 273-cysteine 309, cysteine 277-cysteine 314, and cysteine 288-cysteine 299. The disordered stretch occupies residues 313–335 (ACGPTGRSSSRSQSLRSTDARRR). A compositionally biased stretch (low complexity) spans 319–329 (RSSSRSQSLRS). 4 TSP type-1 domains span residues 354 to 407 (DPAA…AVCP), 409 to 462 (HGAW…ALCP), 467 to 520 (DGNW…QQCP), and 522 to 575 (DGKW…QRCP). 14 disulfide bridges follow: cysteine 366-cysteine 400, cysteine 370-cysteine 406, cysteine 381-cysteine 390, cysteine 421-cysteine 456, cysteine 425-cysteine 461, cysteine 436-cysteine 446, cysteine 479-cysteine 514, cysteine 483-cysteine 519, cysteine 494-cysteine 504, cysteine 534-cysteine 569, cysteine 538-cysteine 574, cysteine 549-cysteine 559, cysteine 581-cysteine 616, and cysteine 604-cysteine 634. Asparagine 401 is a glycosylation site (N-linked (GlcNAc...) asparagine). N-linked (GlcNAc...) asparagine glycosylation occurs at asparagine 607. The residue at position 609 (threonine 609) is a Phosphothreonine. 4 N-linked (GlcNAc...) asparagine glycosylation sites follow: asparagine 692, asparagine 844, asparagine 877, and asparagine 881. Residues 760–939 (RDAYQVTDNL…AILAQLSADA (180 aa)) enclose the GAIN-B domain. Intrachain disulfides connect cysteine 884–cysteine 921 and cysteine 909–cysteine 923. Residues 884–939 (CILWDETDGPSSSAPPQLGPWSWRGCRTVPLDALRTRCLCDRLSTFAILAQLSADA) form a GPS region. The N-terminal stalk following vasculostatin-120 cleavage which is not required for signaling activity stretch occupies residues 927–943 (STFAILAQLSADATMDK). Residues 949 to 969 (VTLIVGCGVSSLTLLMLVIIY) form a helical membrane-spanning segment. The Cytoplasmic segment spans residues 970–980 (VSVWRYIRSER). A helical membrane pass occupies residues 981-1001 (SVILINFCLSIISSNALILIG). The Extracellular segment spans residues 1002-1008 (QTQTRNK). Residues 1009-1029 (VVCTLVAAFLHFFFLSSFCWV) traverse the membrane as a helical segment. The Cytoplasmic segment spans residues 1030-1052 (LTEAWQSYMAVTGRLRSRLVRKR). Residues 1053–1073 (FLCLGWGLPALVVAISVGFTK) form a helical membrane-spanning segment. The Extracellular segment spans residues 1074–1093 (AKGYSTMNYCWLSLEGGLLY). Residues 1094-1114 (AFVGPAAAVVLVNMVIGILVF) traverse the membrane as a helical segment. The Cytoplasmic portion of the chain corresponds to 1115–1136 (NKLVSKDGITDKKLKERAGASL). Residues 1137 to 1157 (WSSCVVLPLLALTWMSAVLAV) traverse the membrane as a helical segment. The Extracellular portion of the chain corresponds to 1158–1166 (TDRRSALFQ). Residues 1167–1187 (ILFAVFDSLEGFVIVMVHCIL) form a helical membrane-spanning segment. Residues 1188 to 1582 (RREVQDAVKC…QDIIDLQTEV (395 aa)) are Cytoplasmic-facing. Residues 1363-1582 (YSINIDQMPQ…QDIIDLQTEV (220 aa)) are involved in interaction with MAGI1. Positions 1382–1549 (PDASFPTRSP…AWVKKELEPL (168 aa)) are disordered. Pro residues predominate over residues 1389 to 1435 (RSPPAREPPGGAPPEVPPVQPPPPPPPPPPPPQQPIPPPPTLEPAPP). Residues 1441 to 1455 (GEPAAHPGPSSGAGA) show a composition bias toward low complexity. The residue at position 1467 (serine 1467) is a Phosphoserine. Basic and acidic residues-rich tracts occupy residues 1468–1484 (LERR…EKIM) and 1491–1520 (QDMF…KPEK). Residues 1579-1582 (QTEV) form an indispensable for interaction with MAGI1 region.

This sequence belongs to the G-protein coupled receptor 2 family. LN-TM7 subfamily. Interacts with ELMO1 and DOCK1. When bound to ELMO1 and DOCK1, acts as a module to promote apoptotic cell engulfment. Interacts with MDM2; the interaction results in inhibition of MDM2-mediated ubiquitination and degradation of DLG4/PSD95. Interacts with PARD3 and TIAM1; the interaction is required for correct dendritic localization of PARD3 and TIAM1 and for dendritic spine formation. Interacts with MAGI1, MAGI3 and BAIAP2. Interacts with PHYHIP. Interacts with DLG4 (via PDZ domain). Vasculostatin-120: Interacts with CD36. Vasculostatin-120: Interacts with ARRB2. Interacts with BAIAP3; this interaction is direct. In terms of processing, proteolytically cleaved to produce vasculostatin-40 and vasculostatin-120. Vasculostatin-40 is the major form and is produced through proteolytic cleavage by MMP14 between residues 321 and 329 with cleavage likely to be between Ser-326 and Leu-327. Ubiquitinated. In brain, widespread expression in all neuropil-rich zones including spinal cord gray matter, cerebellar molecular layer, cerebral cortex, thalamic nuclei and basal ganglia with no expression in white matter (at protein level). In the cerebellar molecular layer, highly expressed in interneuron processes whereas Purkinje cells and their dendrites show weaker expression (at protein level). In the olfactory bulb, highly expressed in glomeruli (at protein level). In the retina, highly concentrated in the outer and inner plexiform layers (at protein level). Expressed in brain. Enriched in hippocampus and cortex. Also detected in other tissues including bone marrow and spleen.

The protein resides in the cell membrane. It is found in the cell projection. Its subcellular location is the phagocytic cup. The protein localises to the cell junction. It localises to the focal adhesion. The protein resides in the dendritic spine. It is found in the postsynaptic density. Its subcellular location is the secreted. In terms of biological role, phosphatidylserine receptor which enhances the engulfment of apoptotic cells. Also mediates the binding and engulfment of Gram-negative bacteria. Stimulates production of reactive oxygen species by macrophages in response to Gram-negative bacteria, resulting in enhanced microbicidal macrophage activity. In the gastric mucosa, required for recognition and engulfment of apoptotic gastric epithelial cells. Promotes myoblast fusion. Activates the Rho pathway in a G-protein-dependent manner. Inhibits MDM2-mediated ubiquitination and degradation of DLG4/PSD95, promoting DLG4 stability and regulating synaptic plasticity. Required for the formation of dendritic spines by ensuring the correct localization of PARD3 and TIAM1. Potent inhibitor of angiogenesis in brain and may play a significant role as a mediator of the p53/TP53 signal in suppression of glioblastoma. Inhibits angiogenesis in a CD36-dependent manner. Functionally, inhibits angiogenesis. In Mus musculus (Mouse), this protein is Adhesion G protein-coupled receptor B1.